A 528-amino-acid chain; its full sequence is Phosphoenolpyruvate carboxykinase (ATP) (528 aa).

Substrate is bound by residues Arg-56, Tyr-192, and Lys-198. ATP-binding positions include Lys-198, His-217, and 233 to 241; that span reads GLSGTGKTT. 2 residues coordinate Mn(2+): Lys-198 and His-217. Residue Asp-254 coordinates Mn(2+). Glu-282, Arg-319, and Thr-444 together coordinate ATP. Arg-319 provides a ligand contact to substrate.

The protein belongs to the phosphoenolpyruvate carboxykinase (ATP) family. It depends on Mn(2+) as a cofactor.

It is found in the cytoplasm. It carries out the reaction oxaloacetate + ATP = phosphoenolpyruvate + ADP + CO2. Its pathway is carbohydrate biosynthesis; gluconeogenesis. Functionally, involved in the gluconeogenesis. Catalyzes the conversion of oxaloacetate (OAA) to phosphoenolpyruvate (PEP) through direct phosphoryl transfer between the nucleoside triphosphate and OAA. The sequence is that of Phosphoenolpyruvate carboxykinase (ATP) from Bacillus pumilus (strain SAFR-032).